A 520-amino-acid polypeptide reads, in one-letter code: 4-hydroxyphenylacetate 3-monooxygenase oxygenase component (520 aa).

FAD contacts are provided by residues 155 to 157 and Thr196; that span reads HAI.

It belongs to the FADH(2)-utilizing monooxygenase family. Homodimer. HPA 3-hydroxylase consists of a reductase component HpaC and an oxygenase component HpaB. Some form of interactions between the reductase and the oxygenase facilitate the transfer of FADH(-) to the oxygenase in P.aeruginosa, although interactions are not required in other species.

The catalysed reaction is 4-hydroxyphenylacetate + FADH2 + O2 = 3,4-dihydroxyphenylacetate + FAD + H2O + H(+). The protein operates within aromatic compound metabolism; 4-hydroxyphenylacetate degradation; pyruvate and succinate semialdehyde from 4-hydroxyphenylacetate: step 1/7. Functionally, oxygenase component of the 4-hydroxyphenylacetate (HPA) 3-hydroxylase. Catalyzes the hydroxylation of 4-hydroxyphenylacetate to form 3,4-dihydroxyphenylacetate, using FADH(-) provided by the reductase component HpaC to activate oxygen. To a lesser extent, can also use reduced FMN. In vitro, has hydroxylation activity toward tyrosol and various cinnamic acid derivatives, catalyzing the hydroxylation of p-coumaric acid, caffeic acid, ferulic acid, and coniferaldehyde. This is 4-hydroxyphenylacetate 3-monooxygenase oxygenase component from Pseudomonas aeruginosa (strain ATCC 15692 / DSM 22644 / CIP 104116 / JCM 14847 / LMG 12228 / 1C / PRS 101 / PAO1).